A 299-amino-acid polypeptide reads, in one-letter code: Diaminopimelate epimerase (299 aa).

Positions 13, 46, and 66 each coordinate substrate. Residue cysteine 75 is the Proton donor of the active site. Substrate-binding positions include 76–77, asparagine 166, asparagine 199, and 217–218; these read GN and ER. Cysteine 226 acts as the Proton acceptor in catalysis. 227–228 provides a ligand contact to substrate; that stretch reads GT.

This sequence belongs to the diaminopimelate epimerase family. In terms of assembly, homodimer.

It localises to the cytoplasm. The catalysed reaction is (2S,6S)-2,6-diaminopimelate = meso-2,6-diaminopimelate. Its pathway is amino-acid biosynthesis; L-lysine biosynthesis via DAP pathway; DL-2,6-diaminopimelate from LL-2,6-diaminopimelate: step 1/1. Its function is as follows. Catalyzes the stereoinversion of LL-2,6-diaminopimelate (L,L-DAP) to meso-diaminopimelate (meso-DAP), a precursor of L-lysine and an essential component of the bacterial peptidoglycan. The chain is Diaminopimelate epimerase from Paraburkholderia phytofirmans (strain DSM 17436 / LMG 22146 / PsJN) (Burkholderia phytofirmans).